We begin with the raw amino-acid sequence, 352 residues long: Carbohydrate sulfotransferase 11 (352 aa).

The Cytoplasmic segment spans residues Met-1–Arg-16. The helical; Signal-anchor for type II membrane protein transmembrane segment at Met-17–Leu-37 threads the bilayer. At His-38–Asp-352 the chain is on the lumenal side. 3'-phosphoadenylyl sulfate is bound by residues Pro-124 to Asn-130 and Arg-186 to Ser-194. 4 N-linked (GlcNAc...) asparagine glycosylation sites follow: Asn-205, Asn-223, Asn-321, and Asn-342.

The protein belongs to the sulfotransferase 2 family. N-glycosylated; required for activity and stability. Predominantly expressed in brain and kidney. Also expressed at weaker level in heart, spleen and lung. Expressed in developing chondrocytes.

Its subcellular location is the golgi apparatus membrane. The catalysed reaction is chondroitin beta-D-glucuronate + n 3'-phosphoadenylyl sulfate = chondroitin 4'-sulfate + n adenosine 3',5'-bisphosphate + n H(+). In terms of biological role, catalyzes the transfer of sulfate to position 4 of the N-acetylgalactosamine (GalNAc) residue of chondroitin. Chondroitin sulfate constitutes the predominant proteoglycan present in cartilage and is distributed on the surfaces of many cells and extracellular matrices. Can also sulfate Gal residues in desulfated dermatan sulfate. Preferentially sulfates in GlcA-&gt;GalNAc unit than in IdoA-&gt;GalNAc unit. Does not form 4, 6-di-O-sulfated GalNAc when chondroitin sulfate C is used as an acceptor. This is Carbohydrate sulfotransferase 11 (Chst11) from Mus musculus (Mouse).